Reading from the N-terminus, the 276-residue chain is Bis(5'-nucleosyl)-tetraphosphatase, symmetrical (276 aa).

This sequence belongs to the Ap4A hydrolase family.

The enzyme catalyses P(1),P(4)-bis(5'-adenosyl) tetraphosphate + H2O = 2 ADP + 2 H(+). Its function is as follows. Hydrolyzes diadenosine 5',5'''-P1,P4-tetraphosphate to yield ADP. This chain is Bis(5'-nucleosyl)-tetraphosphatase, symmetrical, found in Psychromonas ingrahamii (strain DSM 17664 / CCUG 51855 / 37).